Reading from the N-terminus, the 218-residue chain is Large ribosomal subunit protein uL3 (218 aa).

The disordered stretch occupies residues 137–157 (GVGASHGAHKNHRKPGSIGGA).

Belongs to the universal ribosomal protein uL3 family. In terms of assembly, part of the 50S ribosomal subunit. Forms a cluster with proteins L14 and L19.

In terms of biological role, one of the primary rRNA binding proteins, it binds directly near the 3'-end of the 23S rRNA, where it nucleates assembly of the 50S subunit. The sequence is that of Large ribosomal subunit protein uL3 from Kocuria rhizophila (strain ATCC 9341 / DSM 348 / NBRC 103217 / DC2201).